An 855-amino-acid polypeptide reads, in one-letter code: DNA mismatch repair protein MutS (855 aa).

An ATP-binding site is contributed by 615 to 622 (GPNMGGKS).

Belongs to the DNA mismatch repair MutS family.

In terms of biological role, this protein is involved in the repair of mismatches in DNA. It is possible that it carries out the mismatch recognition step. This protein has a weak ATPase activity. This is DNA mismatch repair protein MutS from Aliivibrio salmonicida (strain LFI1238) (Vibrio salmonicida (strain LFI1238)).